A 365-amino-acid chain; its full sequence is Nicotinate N-methyltransferase 1 (365 aa).

Asp232 serves as a coordination point for S-adenosyl-L-methionine.

Belongs to the class I-like SAM-binding methyltransferase superfamily. Cation-independent O-methyltransferase family.

It carries out the reaction nicotinate + S-adenosyl-L-methionine = N-methylnicotinate + S-adenosyl-L-homocysteine. Involved in nicotinate detoxification in planta. Catalyzes the conversion of nicotinate to N-methylnicotinate, which is a detoxified form of endogenous nicotinate in planta. This Oryza sativa subsp. japonica (Rice) protein is Nicotinate N-methyltransferase 1.